The chain runs to 237 residues: Protein CUSTOS (237 aa).

Disordered stretches follow at residues 1-23 (MAAP…LDRF), 50-69 (LRVR…TTPE), and 97-237 (ISKA…LGNE). Residues 52 to 62 (VRPDCHEHDGN) show a composition bias toward basic and acidic residues. Residues 162–177 (STLQQEPQSTPSNVCD) show a composition bias toward polar residues. Residues 181-190 (PKKKRKKKKK) are compositionally biased toward basic residues. The Nucleolar localization signal (NLS1) motif lies at 182-190 (KKKRKKKKK). Basic and acidic residues-rich tracts occupy residues 203 to 216 (ETMH…ELQA) and 225 to 237 (KLEM…LGNE). Residues 217-225 (KRKKKKKQK) carry the Nucleolar localization signal (NLS2) motif.

The protein belongs to the CUSTOS family. In terms of assembly, interacts (via NLS1 and NLS2) with dvl2; the interaction is negatively regulated by Wnt stimulation. Interacts with csnk1a1. Interacts with ctnnb1; the interaction is positively regulated by Wnt stimulation. Post-translationally, phosphorylated by ck1/csnk1a1.

The protein resides in the nucleus envelope. Essential for Spemann-Mangold organizer formation and subsequent anterior head development in the embryo. Inhibits canonical Wnt signaling pathway by antagonizing nuclear import of beta-catenin (ctnnb1) during embryogenesis. The chain is Protein CUSTOS from Xenopus laevis (African clawed frog).